The sequence spans 127 residues: Apolipoprotein C-IV (127 aa).

An N-terminal signal peptide occupies residues 1 to 27 (MSLLRNRLQDLPALCLCVLVLACIGAC).

Belongs to the apolipoprotein C4 family.

The protein localises to the secreted. May participate in lipoprotein metabolism. The chain is Apolipoprotein C-IV (APOC4) from Papio hamadryas (Hamadryas baboon).